The following is a 398-amino-acid chain: O-methyltransferase mpaG (398 aa).

Position 264 (D264) interacts with S-adenosyl-L-methionine. Residue H306 is the Proton acceptor of the active site. Active-site residues include E335 and E362.

The protein belongs to the class I-like SAM-binding methyltransferase superfamily. Cation-independent O-methyltransferase family. COMT subfamily.

Its subcellular location is the cytoplasm. The protein resides in the cytosol. The catalysed reaction is (4E,8E)-10-(4,6-dihydroxy-7-methyl-3-oxo-1,3-dihydro-2-benzofuran-5-yl)-4,8-dimethyldeca-4,8-dienoate + S-adenosyl-L-methionine = (4E,8E)-10-(4-hydroxy-6-methoxy-7-methyl-3-oxo-1,3-dihydro-2-benzofuran-5-yl)-4,8-dimethyldeca-4,8-dienoate + S-adenosyl-L-homocysteine + H(+). The protein operates within secondary metabolite biosynthesis; terpenoid biosynthesis. O-methyltransferase; part of the gene cluster that mediates the biosynthesis of mycophenolic acid (MPA), the first isolated antibiotic natural product in the world obtained from a culture of Penicillium brevicompactum in 1893. MpaC methylates farnesyl-DHMP-3C (FDHMP-3C) to yield MFDHMP-3C. The first step of the pathway is the synthesis of 5-methylorsellinic acid (5MOA) by the cytosolic polyketide synthase mpaC. 5MOA is then converted to the phthalide compound 5,7-dihydroxy-4,6-dimethylphthalide (DHMP) by the endoplasmic reticulum-bound cytochrome P450 monooxygenase mpaDE. MpaDE first catalyzes hydroxylation of 5-MOA to 4,6-dihydroxy-2-(hydroxymethyl)-3-methylbenzoic acid (DHMB). MpaDE then acts as a lactone synthase that catalyzes the ring closure to convert DHMB into DHMP. The next step is the prenylation of DHMP by the Golgi apparatus-associated prenyltransferase mpaA to yield farnesyl-DHMP (FDHMP). The ER-bound oxygenase mpaB then mediates the oxidative cleavage the C19-C20 double bond in FDHMP to yield FDHMP-3C via a mycophenolic aldehyde intermediate. The O-methyltransferase mpaG catalyzes the methylation of FDHMP-3C to yield MFDHMP-3C. After the cytosolic methylation of FDHMP-3C, MFDHMP-3C enters into peroxisomes probably via free diffusion due to its low molecular weight. Upon a peroxisomal CoA ligation reaction, catalyzed by a beta-oxidation component enzyme acyl-CoA ligase ACL891, MFDHMP-3C-CoA would then be restricted to peroxisomes for the following beta-oxidation pathway steps. The peroxisomal beta-oxidation machinery than converts MFDHMP-3C-CoA into MPA_CoA, via a beta-oxidation chain-shortening process. Finally mpaH acts as a peroxisomal acyl-CoA hydrolase with high substrate specificity toward MPA-CoA to release the final product MPA. This chain is O-methyltransferase mpaG, found in Penicillium roqueforti (strain FM164).